We begin with the raw amino-acid sequence, 160 residues long: NADH-quinone oxidoreductase subunit B (160 aa).

Cys37, Cys38, Cys102, and Cys132 together coordinate [4Fe-4S] cluster.

It belongs to the complex I 20 kDa subunit family. In terms of assembly, NDH-1 is composed of 14 different subunits. Subunits NuoB, C, D, E, F, and G constitute the peripheral sector of the complex. It depends on [4Fe-4S] cluster as a cofactor.

It localises to the cell inner membrane. The catalysed reaction is a quinone + NADH + 5 H(+)(in) = a quinol + NAD(+) + 4 H(+)(out). Its function is as follows. NDH-1 shuttles electrons from NADH, via FMN and iron-sulfur (Fe-S) centers, to quinones in the respiratory chain. Couples the redox reaction to proton translocation (for every two electrons transferred, four hydrogen ions are translocated across the cytoplasmic membrane), and thus conserves the redox energy in a proton gradient. The sequence is that of NADH-quinone oxidoreductase subunit B from Neisseria gonorrhoeae (strain ATCC 700825 / FA 1090).